A 232-amino-acid chain; its full sequence is Putative KilA-N domain-containing protein 315L (232 aa).

Residues 15-119 enclose the KilA-N domain; the sequence is NFYYGLFRDF…SSASGVVYVV (105 aa).

The sequence is that of Putative KilA-N domain-containing protein 315L from Acheta domesticus (House cricket).